Consider the following 463-residue polypeptide: Zinc finger protein interacting with ribonucleoprotein K (463 aa).

The KRAB domain maps to 14 to 89 (VTFQDVAICF…PKTNLCEKCV (76 aa)). Disordered stretches follow at residues 106-128 (HSTE…KPLE) and 171-211 (KYRK…TSNG). The segment covering 174–191 (KSTEGRKETSHESDKSEE) has biased composition (basic and acidic residues). Polar residues predominate over residues 192–201 (CQSLSSQKQT). C2H2-type zinc fingers lie at residues 215-237 (YECS…QRVH), 243-265 (WECR…RRIH), 271-293 (YECS…QKTH), 299-321 (YECS…KRVH), 327-349 (YKCS…RRIH), 355-377 (YECR…QRVH), 383-405 (YKCS…RRIH), 411-433 (YECS…QVVH), and 439-461 (YECD…QKCH).

Belongs to the krueppel C2H2-type zinc-finger protein family. As to quaternary structure, interacts with HNRPK. In terms of tissue distribution, expressed in ovary and liver, and at lower levels in brain and muscle.

It is found in the nucleus. In terms of biological role, may be a transcriptional repressor. The polypeptide is Zinc finger protein interacting with ribonucleoprotein K (Zik1) (Mus musculus (Mouse)).